The sequence spans 248 residues: Mannose-binding protein C (248 aa).

An N-terminal signal peptide occupies residues 1–20 (MSLIPSLSLLLMSMVAASYS). Residues 42 to 99 (GINGFPGKDGRDGTKGEKGEPGQGLRGLQGPPGKLGPPGNPGPSGSPGPKGQKGDPGK) enclose the Collagen-like domain. Positions 43–107 (INGFPGKDGR…GKSPDCDSSL (65 aa)) are disordered. P47 is subject to 4-hydroxyproline. Basic and acidic residues predominate over residues 49 to 61 (KDGRDGTKGEKGE). Residues P73, P79, P82, and P88 each carry the 4-hydroxyproline modification. Residues 75-87 (KLGPPGNPGPSGS) are compositionally biased toward pro residues. Residues 93–102 (QKGDPGKSPD) are compositionally biased toward basic and acidic residues. Residues 112 to 130 (RKALQTEMARIKKWLTFSL) are a coiled coil. One can recognise a C-type lectin domain in the interval 134–245 (VGNKFFLTNG…CSSSHLAVCE (112 aa)). 2 cysteine pairs are disulfide-bonded: C155/C244 and C222/C236.

In terms of assembly, oligomeric complex of 3 or more homotrimers. Interacts with MASP1 and MASP2. Interacts with MEP1A and MEP1B and may inhibit their catalytic activity. Post-translationally, hydroxylation on proline residues within the sequence motif, GXPG, is most likely to be 4-hydroxy as this fits the requirement for 4-hydroxylation in vertebrates.

It localises to the secreted. Calcium-dependent lectin involved in innate immune defense. Binds mannose, fucose and N-acetylglucosamine on different microorganisms and activates the lectin complement pathway. Binds to late apoptotic cells, as well as to apoptotic blebs and to necrotic cells, but not to early apoptotic cells, facilitating their uptake by macrophages. In Hylobates lar (Lar gibbon), this protein is Mannose-binding protein C (MBL2).